A 234-amino-acid chain; its full sequence is Large ribosomal subunit protein uL1c (234 aa).

Belongs to the universal ribosomal protein uL1 family. In terms of assembly, part of the 50S ribosomal subunit.

The protein localises to the plastid. The protein resides in the chloroplast. Binds directly to 23S rRNA. Might be involved in E site tRNA release (Potential). The chain is Large ribosomal subunit protein uL1c (rpl1) from Rhodomonas salina (Cryptomonas salina).